A 441-amino-acid polypeptide reads, in one-letter code: GTPase Der (441 aa).

EngA-type G domains follow at residues Pro-3 to Ser-167 and Thr-176 to Ala-351. GTP-binding positions include Gly-9–Ser-16, Asp-56–Phe-60, Asn-119–Asp-122, Gly-182–Ser-189, Asp-229–Ile-233, and Asn-294–Asp-297. Positions Arg-352–Glu-436 constitute a KH-like domain.

The protein belongs to the TRAFAC class TrmE-Era-EngA-EngB-Septin-like GTPase superfamily. EngA (Der) GTPase family. As to quaternary structure, associates with the 50S ribosomal subunit.

GTPase that plays an essential role in the late steps of ribosome biogenesis. This chain is GTPase Der, found in Geotalea uraniireducens (strain Rf4) (Geobacter uraniireducens).